The chain runs to 707 residues: Translation initiation factor IF-2 (707 aa).

Basic and acidic residues predominate over residues 55–80 (LAEKPKEEKQKDQKNHEQEAQDKEEK). Residues 55–88 (LAEKPKEEKQKDQKNHEQEAQDKEEKEIEEDSFY) are disordered. The 170-residue stretch at 209 to 378 (PRPPIVTVMG…LLVAEMEDLK (170 aa)) folds into the tr-type G domain. A G1 region spans residues 218 to 225 (GHVDHGKT). 218 to 225 (GHVDHGKT) contacts GTP. The interval 243–247 (GITQH) is G2. The segment at 264–267 (DTPG) is G3. GTP contacts are provided by residues 264–268 (DTPGH) and 318–321 (NKID). Residues 318-321 (NKID) are G4. Residues 354 to 356 (SAK) form a G5 region.

The protein belongs to the TRAFAC class translation factor GTPase superfamily. Classic translation factor GTPase family. IF-2 subfamily.

The protein localises to the cytoplasm. Functionally, one of the essential components for the initiation of protein synthesis. Protects formylmethionyl-tRNA from spontaneous hydrolysis and promotes its binding to the 30S ribosomal subunits. Also involved in the hydrolysis of GTP during the formation of the 70S ribosomal complex. The chain is Translation initiation factor IF-2 from Caldanaerobacter subterraneus subsp. tengcongensis (strain DSM 15242 / JCM 11007 / NBRC 100824 / MB4) (Thermoanaerobacter tengcongensis).